A 163-amino-acid chain; its full sequence is Type II secretion system protein M (163 aa).

Residues 1-19 (MMDKLQGWWRSISAREQRL) are Cytoplasmic-facing. Residues 20 to 40 (VAVGGSCLLIGFCYWIVWQPI) traverse the membrane as a helical segment. Topologically, residues 41–163 (ANRIAERERQ…VRRLQLSRPQ (123 aa)) are periplasmic.

It belongs to the GSP M family. As to quaternary structure, type II secretion system is composed of four main components: the outer membrane complex, the inner membrane complex, the cytoplasmic secretion ATPase and the periplasm-spanning pseudopilus. Forms homodimers. Interacts with ExeL/GspL. Interacts with ExeE/GspE and ExeF/GspF.

The protein resides in the cell inner membrane. In terms of biological role, inner membrane component of the type II secretion system required for the energy-dependent secretion of extracellular factors such as proteases and toxins from the periplasm. Plays a role in the complex assembly and recruits ExeL resulting in a stable complex in the inner membrane. Provides thus a link between the energy-providing ExeE protein in the cytoplasm and the rest of the T2SS machinery. The protein is Type II secretion system protein M (exeM) of Aeromonas hydrophila.